The chain runs to 157 residues: Phosphomannomutase (157 aa).

The active-site Phosphoserine intermediate is the Ser98. Ser98 is a Mg(2+) binding site.

It belongs to the phosphohexose mutase family. Mg(2+) is required as a cofactor.

It carries out the reaction alpha-D-mannose 1-phosphate = D-mannose 6-phosphate. It participates in nucleotide-sugar biosynthesis; GDP-alpha-D-mannose biosynthesis; alpha-D-mannose 1-phosphate from D-fructose 6-phosphate: step 2/2. Its pathway is capsule biogenesis; capsule polysaccharide biosynthesis. Involved in the biosynthesis of the K2 capsular polysaccharide biosynthesis. The sequence is that of Phosphomannomutase (manB) from Klebsiella pneumoniae.